The primary structure comprises 195 residues: C2 domain-containing protein DDB_G0290753 (195 aa).

The C2 domain maps to 38 to 161; the sequence is KKLTKETKFE…NIKKYSYTFK (124 aa). Ca(2+) is bound by residues Asp-72, Asp-78, Asp-131, Asp-133, and Asp-139.

Ca(2+) serves as cofactor.

The protein is C2 domain-containing protein DDB_G0290753 of Dictyostelium discoideum (Social amoeba).